The primary structure comprises 70 residues: MTTVRVKENEPFDVALRRFKRTIEKIGLLTDLRAREFYEKPTAERKRKKAAAVKRHFKRVRSMQLPKKLY.

Belongs to the bacterial ribosomal protein bS21 family.

In Methylibium petroleiphilum (strain ATCC BAA-1232 / LMG 22953 / PM1), this protein is Small ribosomal subunit protein bS21.